A 571-amino-acid chain; its full sequence is Adenine deaminase (571 aa).

This sequence belongs to the metallo-dependent hydrolases superfamily. Adenine deaminase family. Mn(2+) is required as a cofactor.

The enzyme catalyses adenine + H2O + H(+) = hypoxanthine + NH4(+). The protein is Adenine deaminase of Dehalococcoides mccartyi (strain ATCC BAA-2100 / JCM 16839 / KCTC 5957 / BAV1).